A 1209-amino-acid chain; its full sequence is Calcium-activated potassium channel subunit alpha-1 (1209 aa).

Positions 1 to 26 are enriched in gly residues; sequence MANGGGGGGGGSSGSSGGGGGGGGGE. Disordered regions lie at residues 1 to 29 and 42 to 64; these read MANGGGGGGGGSSGSSGGGGGGGGGETAL and LDASSSSSSSSSSSSSSSSSVHE. Residues 1–87 lie on the Extracellular side of the membrane; sequence MANGGGGGGG…VPCDSRGQRM (87 aa). Low complexity predominate over residues 45–61; that stretch reads SSSSSSSSSSSSSSSSS. Residues 88–108 form a helical membrane-spanning segment; that stretch reads WWAFLASSMVTFFGGLFIILL. Over 109–179 the chain is Cytoplasmic; the sequence is WRTLKYLWTV…MISAQTLTGR (71 aa). Residues cysteine 119, cysteine 120, and cysteine 122 are each lipidated (S-palmitoyl cysteine). Residues 180-200 traverse the membrane as a helical segment; sequence VLVVLVFALSIGALVIYFIDS. The Extracellular portion of the chain corresponds to 201–215; that stretch reads SNPIESCQNFYKDFT. A helical membrane pass occupies residues 216–236; it reads LQIDMAFNVFFLLYFGLRFIA. Residues 237 to 240 are Cytoplasmic-facing; that stretch reads ANDK. A helical membrane pass occupies residues 241 to 261; the sequence is LWFWLEVNSVVDFFTVPPVFV. Topologically, residues 262-265 are extracellular; the sequence is SVYL. The chain crosses the membrane as a helical; Voltage-sensor span at residues 266–286; sequence NRSWLGLRFLRALRLIQFSEI. At 287–301 the chain is on the cytoplasmic side; sequence LQFLNILKTSNSIKL. A helical membrane pass occupies residues 302-322; sequence VNLLSIFISTWLTAAGFIHLV. Residues 323–336 lie on the Extracellular side of the membrane; sequence ENSGDPWENFQNNQ. Residues 337–359 constitute an intramembrane region (pore-forming); the sequence is ALTYWECVYLLMVTMSTVGYGDV. Residues 353-356 carry the Selectivity for potassium motif; the sequence is TVGY. The Extracellular segment spans residues 360 to 368; that stretch reads YAKTTLGRL. A helical transmembrane segment spans residues 369 to 389; that stretch reads FMVFFILGGLAMFASYVPEII. The Cytoplasmic segment spans residues 390–1209; it reads ELIGNRKKYG…DKQKKEMVYR (820 aa). Residues 408-550 form the RCK N-terminal 1 domain; sequence RKHIVVCGHI…WNWKEGDDAI (143 aa). Positions 440, 463, and 465 each coordinate Mg(2+). Residues 557-577 are segment S7; that stretch reads LGFIAQSCLAQGLSTMLANLF. Residues 614 to 634 form a segment S8 region; sequence LSFPTVCELCFVKLKLLMIAI. The interval 682-686 is heme-binding motif; it reads CKACH. Residues 704-734 are disordered; sequence EDEQPPTLSPKKKQRNGGMRNSPNTSPKLMR. Phosphothreonine is present on threonine 710. Phosphoserine is present on residues serine 712, serine 725, and serine 729. The tract at residues 784 to 804 is segment S9; sequence VLSGHVVVCIFGDVSSALIGL. The RCK N-terminal 2 domain occupies 786-930; the sequence is SGHVVVCIFG…MDRSSPDNSP (145 aa). Position 917 is a phosphothreonine (threonine 917). Phosphoserine is present on residues serine 925 and serine 929. The Calcium bowl motif lies at 977 to 999; that stretch reads TELVNDTNVQFLDQDDDDDPDTE. Ca(2+)-binding residues include glutamine 986, aspartate 989, aspartate 992, and aspartate 994. Positions 1006–1026 are segment S10; sequence FACGTAFAVSVLDSLMSATYF. The span at 1160–1185 shows a compositional bias: low complexity; sequence RASLSHSSHSSQSSSKKSSSVHSIPS. The segment at 1160 to 1209 is disordered; that stretch reads RASLSHSSHSSQSSSKKSSSVHSIPSTANRPNRPKSRESRDKQKKEMVYR. Residues 1194–1209 show a composition bias toward basic and acidic residues; the sequence is KSRESRDKQKKEMVYR. 2 positions are modified to phosphoserine: serine 1195 and serine 1198.

It belongs to the potassium channel family. Calcium-activated (TC 1.A.1.3) subfamily. KCa1.1/KCNMA1 sub-subfamily. Homotetramer; which constitutes the calcium-activated potassium channel. Interacts with beta subunits KCNMB1, KCNMB2, KCNMB3 and KCNMB4. Interacts with gamma subunits LRRC26, LRRC38, LRRC52 and LRRC55. Beta and gamma subunits are accessory, and modulate its activity. Interacts with RAB11B. In terms of processing, phosphorylated. Phosphorylation by kinases such as PKA and/or PKG. In smooth muscles, phosphorylation affects its activity. Post-translationally, palmitoylation by ZDHHC22 and ZDHHC23 within the intracellular linker between the S0 and S1 transmembrane domains regulates localization to the plasma membrane. Depalmitoylated by LYPLA1 and LYPLAL1, leading to retard exit from the trans-Golgi network.

The protein localises to the cell membrane. It localises to the endoplasmic reticulum membrane. The catalysed reaction is K(+)(in) = K(+)(out). With respect to regulation, ethanol and carbon monoxide-bound heme increase channel activation. Heme inhibits channel activation. Its function is as follows. Potassium channel activated by both membrane depolarization or increase in cytosolic Ca(2+) that mediates export of K(+). It is also activated by the concentration of cytosolic Mg(2+). Its activation dampens the excitatory events that elevate the cytosolic Ca(2+) concentration and/or depolarize the cell membrane. It therefore contributes to repolarization of the membrane potential. Plays a key role in controlling excitability in a number of systems, such as regulation of the contraction of smooth muscle, the tuning of hair cells in the cochlea, regulation of transmitter release, and innate immunity. In smooth muscles, its activation by high level of Ca(2+), caused by ryanodine receptors in the sarcoplasmic reticulum, regulates the membrane potential. In cochlea cells, its number and kinetic properties partly determine the characteristic frequency of each hair cell and thereby helps to establish a tonotopic map. Kinetics of KCNMA1 channels are determined by alternative splicing, phosphorylation status and its combination with modulating beta subunits. Highly sensitive to both iberiotoxin (IbTx) and charybdotoxin (CTX). In terms of biological role, potassium channel activated by both membrane depolarization or increase in cytosolic Ca(2+) that mediates export of K(+). This Rattus norvegicus (Rat) protein is Calcium-activated potassium channel subunit alpha-1 (Kcnma1).